Consider the following 293-residue polypeptide: Energy-coupling factor transporter ATP-binding protein EcfA2 (293 aa).

The ABC transporter domain occupies 3–246 (ITFQKVEHRY…ADELEKIGVD (244 aa)). An ATP-binding site is contributed by 40 to 47 (GHTGSGKS).

The protein belongs to the ABC transporter superfamily. Energy-coupling factor EcfA family. As to quaternary structure, forms a stable energy-coupling factor (ECF) transporter complex composed of 2 membrane-embedded substrate-binding proteins (S component), 2 ATP-binding proteins (A component) and 2 transmembrane proteins (T component).

The protein localises to the cell membrane. In terms of biological role, ATP-binding (A) component of a common energy-coupling factor (ECF) ABC-transporter complex. Unlike classic ABC transporters this ECF transporter provides the energy necessary to transport a number of different substrates. This chain is Energy-coupling factor transporter ATP-binding protein EcfA2, found in Bacillus cereus (strain ATCC 14579 / DSM 31 / CCUG 7414 / JCM 2152 / NBRC 15305 / NCIMB 9373 / NCTC 2599 / NRRL B-3711).